Here is an 878-residue protein sequence, read N- to C-terminus: Multiple RNA-binding domain-containing protein 1 (878 aa).

One can recognise an RRM 1 domain in the interval 2-90; the sequence is SRVIVKGLPI…SKIEVSMAKS (89 aa). 3 disordered regions span residues 118-143, 159-269, and 287-323; these read LLAD…KHDI, TMKP…AKDE, and GADT…EKSL. Positions 159 to 177 are enriched in polar residues; the sequence is TMKPSSQVTSWETVQSSKT. Over residues 180–190 the composition is skewed to acidic residues; sequence EDEEAADDEVG. Residues 295 to 304 are compositionally biased toward low complexity; the sequence is QQQQPDTEQQ. The span at 305–319 shows a compositional bias: acidic residues; the sequence is QPEETEVETSQESEE. 4 RRM domains span residues 330–408, 516–588, 651–734, and 752–829; these read GRLF…PADA, RVIL…KGPS, VSIF…LSHR, and GKII…FVEQ. Positions 732–751 are disordered; sequence SHRQGTSTTNASSKKKKKNQ. Positions 852–878 are disordered; it reads TKIANMRNSGKRKIDLDEDDENDGLQG. The span at 867–878 shows a compositional bias: acidic residues; the sequence is LDEDDENDGLQG.

The protein belongs to the RRM MRD1 family.

The protein resides in the nucleus. Involved in pre-rRNA processing. In Kluyveromyces lactis (strain ATCC 8585 / CBS 2359 / DSM 70799 / NBRC 1267 / NRRL Y-1140 / WM37) (Yeast), this protein is Multiple RNA-binding domain-containing protein 1 (MRD1).